Reading from the N-terminus, the 21-residue chain is Peptide PGLa-BM2 (21 aa).

Ala21 carries the post-translational modification Alanine amide.

Expressed by the skin glands.

The protein localises to the secreted. In terms of biological role, antimicrobial peptide. The polypeptide is Peptide PGLa-BM2 (Xenopus boumbaensis (Mawa clawed frog)).